Here is a 250-residue protein sequence, read N- to C-terminus: Large ribosomal subunit protein uL4 (250 aa).

Disordered regions lie at residues 1-20 (MQVT…DLPR) and 51-101 (YAGL…HGLD). Over residues 92–101 (PKAEKDHGLD) the composition is skewed to basic and acidic residues.

It belongs to the universal ribosomal protein uL4 family. As to quaternary structure, part of the 50S ribosomal subunit.

Functionally, one of the primary rRNA binding proteins, this protein initially binds near the 5'-end of the 23S rRNA. It is important during the early stages of 50S assembly. It makes multiple contacts with different domains of the 23S rRNA in the assembled 50S subunit and ribosome. Forms part of the polypeptide exit tunnel. The polypeptide is Large ribosomal subunit protein uL4 (Halobacterium salinarum (strain ATCC 29341 / DSM 671 / R1)).